A 452-amino-acid chain; its full sequence is Caspase-2 (452 aa).

Position 2 is an N-acetylalanine (A2). Positions 2–169 (AASSGRSQSS…TMEHSLDNGD (168 aa)) are excised as a propeptide. The 90-residue stretch at 32–121 (MHPDHQETLK…GHLEDLLLTT (90 aa)) folds into the CARD domain. S157 carries the phosphoserine modification. Residues H277 and C320 contribute to the active site. Residues 326 to 333 (DRGVDQQD) constitute a propeptide that is removed on maturation. A compositionally biased stretch (basic and acidic residues) spans 327–336 (RGVDQQDGKN). The disordered stretch occupies residues 327 to 349 (RGVDQQDGKNHAQSPGCEESDAG). A Phosphoserine modification is found at S340.

This sequence belongs to the peptidase C14A family. In terms of assembly, heterotetramer that consists of two anti-parallel arranged heterodimers, each one formed by a p18 subunit and a p12 subunit. Forms a complex named the PIDDosome with PIDD1 and CRADD. Interacts with NOL3 (via CARD domain); inhibits CASP2 activity in a phosphorylation-dependent manner. Post-translationally, the mature protease can process its own propeptide, but not that of other caspases.

The enzyme catalyses Strict requirement for an Asp residue at P1, with 316-Asp being essential for proteolytic activity and has a preferred cleavage sequence of Val-Asp-Val-Ala-Asp-|-.. In terms of biological role, involved in the activation cascade of caspases responsible for apoptosis execution. Might function by either activating some proteins required for cell death or inactivating proteins necessary for cell survival. Associates with PIDD1 and CRADD to form the PIDDosome, a complex that activates CASP2 and triggers apoptosis in response to genotoxic stress. In Rattus norvegicus (Rat), this protein is Caspase-2 (Casp2).